The chain runs to 163 residues: Nucleotide-binding protein DET1318 (163 aa).

The protein belongs to the YajQ family.

Functionally, nucleotide-binding protein. This is Nucleotide-binding protein DET1318 from Dehalococcoides mccartyi (strain ATCC BAA-2266 / KCTC 15142 / 195) (Dehalococcoides ethenogenes (strain 195)).